A 151-amino-acid chain; its full sequence is Deoxyuridine 5'-triphosphate nucleotidohydrolase (151 aa).

Substrate is bound by residues 70-72 (RSG), Asn83, 87-89 (LID), and Met97.

This sequence belongs to the dUTPase family. Mg(2+) is required as a cofactor.

It catalyses the reaction dUTP + H2O = dUMP + diphosphate + H(+). Its pathway is pyrimidine metabolism; dUMP biosynthesis; dUMP from dCTP (dUTP route): step 2/2. This enzyme is involved in nucleotide metabolism: it produces dUMP, the immediate precursor of thymidine nucleotides and it decreases the intracellular concentration of dUTP so that uracil cannot be incorporated into DNA. This Pasteurella multocida (strain Pm70) protein is Deoxyuridine 5'-triphosphate nucleotidohydrolase.